Reading from the N-terminus, the 934-residue chain is Bifunctional uridylyltransferase/uridylyl-removing enzyme (934 aa).

Residues 1-379 form a uridylyltransferase region; it reads MSAHDLKLEE…TFSRRKRKLS (379 aa). The uridylyl-removing stretch occupies residues 380-736; sequence DDGAFISENH…AKPHAFEAVT (357 aa). Positions 496-613 constitute an HD domain; the sequence is VDEHLLRCIA…IDFADTVQTM (118 aa). ACT domains lie at 737-818 and 848-931; these read EITV…DMLA and VIEV…RSPQ.

This sequence belongs to the GlnD family. Mg(2+) is required as a cofactor.

The enzyme catalyses [protein-PII]-L-tyrosine + UTP = [protein-PII]-uridylyl-L-tyrosine + diphosphate. The catalysed reaction is [protein-PII]-uridylyl-L-tyrosine + H2O = [protein-PII]-L-tyrosine + UMP + H(+). With respect to regulation, uridylyltransferase (UTase) activity is inhibited by glutamine, while glutamine activates uridylyl-removing (UR) activity. Functionally, modifies, by uridylylation and deuridylylation, the PII regulatory proteins (GlnB and homologs), in response to the nitrogen status of the cell that GlnD senses through the glutamine level. Under low glutamine levels, catalyzes the conversion of the PII proteins and UTP to PII-UMP and PPi, while under higher glutamine levels, GlnD hydrolyzes PII-UMP to PII and UMP (deuridylylation). Thus, controls uridylylation state and activity of the PII proteins, and plays an important role in the regulation of nitrogen assimilation and metabolism. The chain is Bifunctional uridylyltransferase/uridylyl-removing enzyme from Brucella ovis (strain ATCC 25840 / 63/290 / NCTC 10512).